The sequence spans 242 residues: Glutamine transport ATP-binding protein GlnQ (242 aa).

One can recognise an ABC transporter domain in the interval 2–236; sequence IYFHQVNKYY…PKEERAKVFL (235 aa). 34–41 contacts ATP; that stretch reads GPSGSGKS.

Belongs to the ABC transporter superfamily.

The protein localises to the cell membrane. Part of the binding-protein-dependent transport system for glutamine. Probably responsible for energy coupling to the transport system. The sequence is that of Glutamine transport ATP-binding protein GlnQ (glnQ) from Geobacillus stearothermophilus (Bacillus stearothermophilus).